Here is a 36-residue protein sequence, read N- to C-terminus: Potassium channel toxin alpha-KTx 1.9 (36 aa).

This sequence belongs to the short scorpion toxin superfamily. Potassium channel inhibitor family. Alpha-KTx 01 subfamily. Expressed by the venom gland.

It is found in the secreted. In terms of biological role, potent selective inhibitor of Kv1/KCNA voltage-gated potassium channels. In Centruroides limbatus (Bark scorpion), this protein is Potassium channel toxin alpha-KTx 1.9.